The chain runs to 610 residues: Phosphoprotein 85 (610 aa).

Disordered stretches follow at residues 462 to 530 (NEGR…NISD) and 543 to 610 (EEPM…DARL). Residues 467–478 (SSRASPSHSTST) are compositionally biased toward low complexity. Positions 484-495 (PQSDRSTPTSIL) are enriched in polar residues. Low complexity-rich tracts occupy residues 503 to 515 (SNSRSSSVSFSQE) and 552 to 567 (SPQSTSSNNSMSRQSR). A compositionally biased stretch (polar residues) spans 581–592 (VPSSQTRRQNNA). Basic and acidic residues predominate over residues 600–610 (RLTEMMNDARL).

This sequence belongs to the herpesviridae pp85 family. In terms of processing, phosphorylated.

Its subcellular location is the virion tegument. The protein resides in the host cytoplasm. The chain is Phosphoprotein 85 (U14) from Homo sapiens (Human).